The sequence spans 723 residues: CSC1-like protein ERD4 (723 aa).

Topologically, residues 1–5 are cytoplasmic; it reads MEFAS. The chain crosses the membrane as a helical span at residues 6–26; that stretch reads FLVSLGTSAIIFVVLMFLFTW. The Extracellular segment spans residues 27-90; the sequence is LSRRPGNVPV…TAVYFVFQST (64 aa). The helical transmembrane segment at 91-111 threads the bilayer; sequence VLGIFALSALLLLPTLLPIAA. The Cytoplasmic portion of the chain corresponds to 112–148; sequence TDNNLETSRSATDTTSNGTFSQLDNLSMANITKSSSR. The chain crosses the membrane as a helical span at residues 149–169; it reads LWAFLGAVYWVSVVTYFMLWK. Residues 170 to 364 lie on the Extracellular side of the membrane; sequence AYKHVAALRA…IKFFSRIVRQ (195 aa). The chain crosses the membrane as a helical span at residues 365 to 385; it reads YVIYFLVAITILFYMIPIAFV. The Cytoplasmic portion of the chain corresponds to 386-416; sequence SAITTLANLQKALPFLKPIVDIAFIRTILES. Residues 417 to 437 form a helical membrane-spanning segment; the sequence is YLPQIALIVFLAMLPKFLMFL. Residues 438 to 456 are Extracellular-facing; the sequence is SKSEGIPSQSHAIRATSGK. Residues 457–477 traverse the membrane as a helical segment; the sequence is YFYFSVLNVFIGVTLAGSLFE. Residues 478 to 508 are Cytoplasmic-facing; sequence NLKALEEKPNSFITLLATSLPKSATFFLTYV. A helical membrane pass occupies residues 509 to 529; sequence ALKFFVGYGLELSRIIPLIIF. Topologically, residues 530-572 are extracellular; the sequence is HLKKKYLCKTEAEVKEAWYPGDLSYATRVPSDMLILTITFCYS. A helical membrane pass occupies residues 573–593; sequence VIAPLILVFGVIYFGLGWLIL. Residues 594 to 614 are Cytoplasmic-facing; the sequence is RNQALKVYVPSYESYGRMWPH. The helical transmembrane segment at 615–635 threads the bilayer; sequence IHTRILAALFLFQLVMFGYLG. Over 636-637 the chain is Extracellular; it reads VK. The chain crosses the membrane as a helical span at residues 638 to 658; it reads IFVWAILLVPLIFISLIFGYV. Over 659 to 723 the chain is Cytoplasmic; that stretch reads CRQKFYGGFE…YQDYAAISAA (65 aa).

This sequence belongs to the CSC1 (TC 1.A.17) family.

It is found in the plastid. Its subcellular location is the chloroplast membrane. In terms of biological role, acts as an osmosensitive calcium-permeable cation channel. The chain is CSC1-like protein ERD4 (ERD4) from Brassica juncea (Indian mustard).